We begin with the raw amino-acid sequence, 317 residues long: Transaldolase (317 aa).

Lys-126 acts as the Schiff-base intermediate with substrate in catalysis.

This sequence belongs to the transaldolase family. Type 1 subfamily. In terms of assembly, homodimer.

The protein localises to the cytoplasm. It catalyses the reaction D-sedoheptulose 7-phosphate + D-glyceraldehyde 3-phosphate = D-erythrose 4-phosphate + beta-D-fructose 6-phosphate. The protein operates within carbohydrate degradation; pentose phosphate pathway; D-glyceraldehyde 3-phosphate and beta-D-fructose 6-phosphate from D-ribose 5-phosphate and D-xylulose 5-phosphate (non-oxidative stage): step 2/3. In terms of biological role, transaldolase is important for the balance of metabolites in the pentose-phosphate pathway. This chain is Transaldolase, found in Burkholderia mallei (strain SAVP1).